The sequence spans 451 residues: Probable plasmid replicative DNA helicase (451 aa).

The SF4 helicase domain occupies 194–451 (NDSFYDGLPT…SKFSAIKKVW (258 aa)). 225–232 (ARPSIGKT) contacts ATP.

Belongs to the helicase family. DnaB subfamily. Homohexamer.

The catalysed reaction is Couples ATP hydrolysis with the unwinding of duplex DNA at the replication fork by translocating in the 5'-3' direction. This creates two antiparallel DNA single strands (ssDNA). The leading ssDNA polymer is the template for DNA polymerase III holoenzyme which synthesizes a continuous strand.. It catalyses the reaction ATP + H2O = ADP + phosphate + H(+). A replicative DNA helicase, it participates in initiation and elongation during DNA replication. Travels ahead of the DNA replisome, separating dsDNA into templates for DNA synthesis. A processive ATP-dependent 5'-3' DNA helicase it has DNA-dependent ATPase activity. The chain is Probable plasmid replicative DNA helicase from Chlamydia muridarum (strain MoPn / Nigg).